Here is a 456-residue protein sequence, read N- to C-terminus: MSFRKRGEILNDRGSGLRGPLLRGPPRTSSTPLRTGNRRAPGNVPLSDTTARLKKLNIADESKTKMGLDSSHVGVRPSPATSQPTTSTGSADLDSILGHMGLPLGNSVLVEEQSTTEFHSILGKLFAAQGIVHNRISDSSADKTRNGDTHVIVLSLNQMFAKELPGIYKGSRKQMKKNLISEEESKVTVQNLNETQRSTPSRYKDLKIAWKYKLADEKRLGSPDRDDIQQNSEYKDYNHQFDITTRLMPAPIASELTFIAPTQPVSTILSQIEQTIKRNDKKLIRIVIPSLLHPAMYPPKMFESSEIIGLMHGVRSLVKKYYERVVLFASISIDIITPPLLVLLRNMFDSVINLEPFNQEMTEFLERVYKSQPGKIQHGLVHILKLPVFTDRGEMRVLKSEWAFKNGRKKFEIEQWGIPVDDAEGSAASEQSHSHSHSDEISHNIPAKKTKISLDY.

The segment covering 1–11 has biased composition (basic and acidic residues); it reads MSFRKRGEILN. The disordered stretch occupies residues 1–91; that stretch reads MSFRKRGEIL…SQPTTSTGSA (91 aa). Arginine 13 bears the Omega-N-methylarginine mark. Positions 18–27 are enriched in low complexity; the sequence is RGPLLRGPPR. Positions 57–66 are enriched in basic and acidic residues; sequence NIADESKTKM. Low complexity predominate over residues 77–90; sequence PSPATSQPTTSTGS. Position 222 is a phosphoserine (serine 222). A disordered region spans residues 424–444; it reads EGSAASEQSHSHSHSDEISHN. Positions 432–442 are enriched in basic and acidic residues; the sequence is SHSHSHSDEIS.

It belongs to the ELP4 family. Component of the elongator complex which consists of ELP1/IKI3, ELP2, ELP3, ELP4, ELP5/IKI1 and ELP6. The elongator complex is composed of two copies of the Elp123 subcomplex (composed of ELP1/IKI3, ELP2 and ELP3) and two copies of the Elp456 subcomplex (composed of ELP4, ELP5/IKI1 and ELP6). The Elp123 subcomplex forms a two-lobed scaffold, which binds the Elp456 subcomplex asymmetrically. In each lobe, ELP2 is tightly sandwiched between ELP1/IKI3 and ELP3. The Elp123 subcomplex binds tRNA through ELP1/IKI3 and ELP3 and can bind 2 tRNAs simultaneously. tRNA-binding by the Elp123 subcomplex induces conformational rearrangements which precisely position the targeted anticodon base in the active site. The Elp456 subcomplex binds tRNA and has ATPase activity. ELP4 interacts with KTI12.

The protein resides in the cytoplasm. Its subcellular location is the nucleus. The protein operates within tRNA modification; 5-methoxycarbonylmethyl-2-thiouridine-tRNA biosynthesis. Its function is as follows. Component of the elongator complex, a multiprotein complex which is required for multiple tRNA modifications, including mcm5U (5-methoxycarbonylmethyl uridine), mcm5s2U (5-methoxycarbonylmethyl-2-thiouridine), and ncm5U (5-carbamoylmethyl uridine). The elongator complex catalyzes formation of carboxymethyluridine in the wobble base at position 34 in tRNAs. It functions as a gamma-toxin target (TOT); disruption of the complex confers resistance to Kluyveromyces lactis toxin zymocin (pGKL1 killer toxin). May also be involved in sensitivity to Pichia inositovora toxin. This Saccharomyces cerevisiae (strain ATCC 204508 / S288c) (Baker's yeast) protein is Elongator complex protein 4.